Here is a 132-residue protein sequence, read N- to C-terminus: Small ribosomal subunit protein eS12 (132 aa).

Alanine 2 is subject to N-acetylalanine. Lysine 129 is modified (N6-succinyllysine).

Belongs to the eukaryotic ribosomal protein eS12 family. As to quaternary structure, part of the small subunit (SSU) processome, composed of more than 70 proteins and the RNA chaperone small nucleolar RNA (snoRNA) U3. Subunit of the 40S ribosomal complex.

It is found in the nucleus. Its subcellular location is the nucleolus. Functionally, part of the small subunit (SSU) processome, first precursor of the small eukaryotic ribosomal subunit. During the assembly of the SSU processome in the nucleolus, many ribosome biogenesis factors, an RNA chaperone and ribosomal proteins associate with the nascent pre-rRNA and work in concert to generate RNA folding, modifications, rearrangements and cleavage as well as targeted degradation of pre-ribosomal RNA by the RNA exosome. Subunit of the 40S ribosomal complex. The sequence is that of Small ribosomal subunit protein eS12 (Rps12) from Rattus norvegicus (Rat).